Reading from the N-terminus, the 359-residue chain is Pyruvate dehydrogenase E1 component subunit beta, mitochondrial (359 aa).

The N-terminal 30 residues, Met1 to Ala30, are a transit peptide targeting the mitochondrion. Tyr67 carries the phosphotyrosine modification. Glu89 contacts thiamine diphosphate. 5 residues coordinate K(+): Ile142, Ala190, Ile191, Asp193, and Asn195. Lys354 bears the N6-acetyllysine mark.

Heterotetramer of two PDHA1 and two PDHB subunits. The heterotetramer interacts with DLAT, and is part of the multimeric pyruvate dehydrogenase complex that contains multiple copies of pyruvate dehydrogenase (E1), dihydrolipoamide acetyltransferase (DLAT, E2) and lipoamide dehydrogenase (DLD, E3). These subunits are bound to an inner core composed of about 48 DLAT and 12 PDHX molecules. Interacts with DLAT. It depends on thiamine diphosphate as a cofactor.

It is found in the mitochondrion matrix. It carries out the reaction N(6)-[(R)-lipoyl]-L-lysyl-[protein] + pyruvate + H(+) = N(6)-[(R)-S(8)-acetyldihydrolipoyl]-L-lysyl-[protein] + CO2. The pyruvate dehydrogenase complex catalyzes the overall conversion of pyruvate to acetyl-CoA and CO(2), and thereby links the glycolytic pathway to the tricarboxylic cycle. This Mus musculus (Mouse) protein is Pyruvate dehydrogenase E1 component subunit beta, mitochondrial (Pdhb).